We begin with the raw amino-acid sequence, 844 residues long: DNA mismatch repair protein MutS (844 aa).

Residue 610–617 (GPNMGGKS) participates in ATP binding.

This sequence belongs to the DNA mismatch repair MutS family.

This protein is involved in the repair of mismatches in DNA. It is possible that it carries out the mismatch recognition step. This protein has a weak ATPase activity. In Francisella tularensis subsp. holarctica (strain FTNF002-00 / FTA), this protein is DNA mismatch repair protein MutS.